The chain runs to 400 residues: Glycine betaine/proline betaine transport system ATP-binding protein ProV (400 aa).

The region spanning 29–265 (LSKEQILEKT…PANDYVRTFF (237 aa)) is the ABC transporter domain. 61-68 (GLSGSGKS) contacts ATP. CBS domains are found at residues 282 to 341 (RTPN…GLDA) and 343 to 400 (LIDA…VNNG).

The protein belongs to the ABC transporter superfamily. The complex is composed of two ATP-binding proteins (ProV), two transmembrane proteins (ProW) and a solute-binding protein (ProX).

Its subcellular location is the cell inner membrane. Part of the ProU ABC transporter complex involved in glycine betaine and proline betaine uptake. Probably responsible for energy coupling to the transport system. This Escherichia coli (strain K12) protein is Glycine betaine/proline betaine transport system ATP-binding protein ProV.